We begin with the raw amino-acid sequence, 620 residues long: Probable protein arginine N-methyltransferase 3 (620 aa).

Residues 1–17 (MATREHELRPEQERLGE) show a composition bias toward basic and acidic residues. Residues 1-45 (MATREHELRPEQERLGEDREEYEDGEEEEEEGEEGWDDWESDGDD) are disordered. Residues 18 to 45 (DREEYEDGEEEEEEGEEGWDDWESDGDD) show a composition bias toward acidic residues. The C2H2-type 1 zinc finger occupies 55–78 (LLCLFCSARFDSESSLFSHCASEH). The C2H2-type 2; degenerate zinc finger occupies 110–137 (NKCWSCGQVFSSNSELCGHLHALEIPQL). The region spanning 253 to 582 (DESYFGSYSS…DECPAVMIRS (330 aa)) is the SAM-dependent MTase PRMT-type domain. S-adenosyl-L-homocysteine-binding residues include Arg-275, Gly-299, Asp-321, Ser-323, and Glu-364. Active-site residues include Glu-383 and Glu-392.

This sequence belongs to the class I-like SAM-binding methyltransferase superfamily. Protein arginine N-methyltransferase family.

The protein resides in the cytoplasm. It is found in the cytosol. The catalysed reaction is L-arginyl-[protein] + S-adenosyl-L-methionine = N(omega)-methyl-L-arginyl-[protein] + S-adenosyl-L-homocysteine + H(+). It carries out the reaction L-arginyl-[protein] + 2 S-adenosyl-L-methionine = N(omega),N(omega)-dimethyl-L-arginyl-[protein] + 2 S-adenosyl-L-homocysteine + 2 H(+). Protein-arginine N-methyltransferase that catalyzes both the monomethylation and asymmetric dimethylation of the guanidino nitrogens of arginine residues in target proteins, and therefore falls into the group of type I methyltransferases. In Oryza sativa subsp. japonica (Rice), this protein is Probable protein arginine N-methyltransferase 3 (PRMT3).